A 200-amino-acid polypeptide reads, in one-letter code: Isochorismatase family protein 2A (200 aa).

Belongs to the isochorismatase family.

This is Isochorismatase family protein 2A from Dictyostelium discoideum (Social amoeba).